Here is a 485-residue protein sequence, read N- to C-terminus: Glutamyl-tRNA(Gln) amidotransferase subunit A (485 aa).

Active-site charge relay system residues include Lys79 and Ser154. The active-site Acyl-ester intermediate is Ser178.

This sequence belongs to the amidase family. GatA subfamily. As to quaternary structure, heterotrimer of A, B and C subunits.

The catalysed reaction is L-glutamyl-tRNA(Gln) + L-glutamine + ATP + H2O = L-glutaminyl-tRNA(Gln) + L-glutamate + ADP + phosphate + H(+). Its function is as follows. Allows the formation of correctly charged Gln-tRNA(Gln) through the transamidation of misacylated Glu-tRNA(Gln) in organisms which lack glutaminyl-tRNA synthetase. The reaction takes place in the presence of glutamine and ATP through an activated gamma-phospho-Glu-tRNA(Gln). The protein is Glutamyl-tRNA(Gln) amidotransferase subunit A of Clostridium botulinum (strain Kyoto / Type A2).